Here is a 339-residue protein sequence, read N- to C-terminus: Cytochrome c biogenesis protein CcsA (339 aa).

A run of 7 helical transmembrane segments spans residues 6–26 (LEHI…LVFW), 37–57 (IGSL…GLLL), 71–91 (LYES…VSEI), 97–117 (WLGI…TVGL), 142–162 (MMIP…ALLI), 247–267 (IISL…VWVN), and 281–299 (TWAL…IRMI).

It belongs to the CcmF/CycK/Ccl1/NrfE/CcsA family. In terms of assembly, may interact with Ccs1.

The protein resides in the plastid. The protein localises to the chloroplast thylakoid membrane. Its function is as follows. Required during biogenesis of c-type cytochromes (cytochrome c6 and cytochrome f) at the step of heme attachment. This chain is Cytochrome c biogenesis protein CcsA, found in Anthoceros angustus (Hornwort).